We begin with the raw amino-acid sequence, 475 residues long: 3-hydroxyacyl-CoA dehydrogenase-like protein LAM1 (475 aa).

Residue 99–104 (GTRPFA) coordinates NAD(+). Position 149 (Lys149) interacts with CoA. NAD(+) is bound at residue Asn245.

It belongs to the 3-hydroxyacyl-CoA dehydrogenase family.

Its pathway is mycotoxin biosynthesis. Its function is as follows. 3-hydroxyacyl-CoA dehydrogenase-like protein; part of the Tox1A locus, one of the 2 loci that mediate the biosynthesis of T-toxin, a family of linear polyketides 37 to 45 carbons in length, of which the major component is 41 carbons, and which leads to high virulence to maize. One of the PKSs (PKS1 or PKS2) could synthesize a precursor, used subsequently by the other PKS as starter unit, to add additional carbons. Variability in the length of the final carbon backbone C35-47 could be achieved by varying the number of condensation cycles, or use of different starter or extender units or might be due to decarboxylation of the penultimate product, catalyzed by DEC1. Additional proteins are required for the biosynthesis of T-toxin, including oxidoreductases RED1, RED2, RED3, LAM1 and OXI1, as well as esterase TOX9. This Cochliobolus heterostrophus (strain C4 / ATCC 48331 / race T) (Southern corn leaf blight fungus) protein is 3-hydroxyacyl-CoA dehydrogenase-like protein LAM1.